We begin with the raw amino-acid sequence, 385 residues long: ATP phosphoribosyltransferase regulatory subunit (385 aa).

This sequence belongs to the class-II aminoacyl-tRNA synthetase family. HisZ subfamily. As to quaternary structure, heteromultimer composed of HisG and HisZ subunits.

It is found in the cytoplasm. It participates in amino-acid biosynthesis; L-histidine biosynthesis; L-histidine from 5-phospho-alpha-D-ribose 1-diphosphate: step 1/9. In terms of biological role, required for the first step of histidine biosynthesis. May allow the feedback regulation of ATP phosphoribosyltransferase activity by histidine. In Bordetella petrii (strain ATCC BAA-461 / DSM 12804 / CCUG 43448), this protein is ATP phosphoribosyltransferase regulatory subunit.